Here is a 226-residue protein sequence, read N- to C-terminus: 6-carboxyhexanoate--CoA ligase (226 aa).

The protein belongs to the BioW family. As to quaternary structure, homodimer. It depends on Mg(2+) as a cofactor.

It carries out the reaction heptanedioate + ATP + CoA = 6-carboxyhexanoyl-CoA + AMP + diphosphate. It functions in the pathway metabolic intermediate metabolism; pimeloyl-CoA biosynthesis; pimeloyl-CoA from pimelate: step 1/1. In terms of biological role, catalyzes the transformation of pimelate into pimeloyl-CoA with concomitant hydrolysis of ATP to AMP. This chain is 6-carboxyhexanoate--CoA ligase, found in Methanocaldococcus infernus (strain DSM 11812 / JCM 15783 / ME).